Here is a 474-residue protein sequence, read N- to C-terminus: Nucleobindin-1 (474 aa).

The N-terminal stretch at 1 to 24 is a signal peptide; that stretch reads MPPSGPRAALFLLPSLLLLRAVLA. At serine 83 the chain carries Phosphoserine. Position 145 is a phosphothreonine (threonine 145). Residues 147–215 adopt a coiled-coil conformation; it reads EARDLELLIQ…QQRRHREHPK (69 aa). Residues 190–207 show a composition bias toward basic and acidic residues; it reads SLGEEQRKEAERKLEEQQ. The interval 190-218 is disordered; that stretch reads SLGEEQRKEAERKLEEQQRRHREHPKVNV. The tract at residues 225–318 is binds to GNAI2 and GNAI3; the sequence is LKEVWEELDG…VTLEEFLAST (94 aa). 2 EF-hand domains span residues 237–272 and 289–324; these read PNRF…ELEK and ERLR…KEFG. Residues aspartate 250, asparagine 252, aspartate 254, glutamate 261, aspartate 302, asparagine 304, aspartate 306, and glutamate 313 each contribute to the Ca(2+) site. Residues 300–330 carry the GBA motif; sequence NVDTNQDRLVTLEEFLASTQRKEFGDTGEGW. Residues 355–422 are a coiled coil; it reads AYTEEELRRF…RKQQQQSHNN (68 aa). The disordered stretch occupies residues 382–474; that stretch reads LSQETEALGR…EPPQLDSQHL (93 aa). The residue at position 383 (serine 383) is a Phosphoserine. Over residues 448–460 the composition is skewed to basic and acidic residues; that stretch reads DQKDVDASEKKVP. Serine 471 is subject to Phosphoserine.

The protein belongs to the nucleobindin family. Interacts (via GBA motif) with guanine nucleotide-binding protein G(i) alpha subunits GNAI1, GNAI2 and GNAI3 with higher affinity for GNAI1 and GNAI3 than for GNAI2. Preferentially interacts with inactive rather than active GNAI3. Interaction with GNAI3 is inhibited when NUCB1 binds calcium, probably due to a conformational change which renders the GBA motif inaccessible. As to expression, expressed in bone where it is detected in the soft tissue in the center of the osteon and in the osteocyte lacuna (at protein level).

Its subcellular location is the golgi apparatus. The protein resides in the cis-Golgi network membrane. The protein localises to the cytoplasm. It localises to the secreted. Its function is as follows. Major calcium-binding protein of the Golgi which may have a role in calcium homeostasis. Acts as a non-receptor guanine nucleotide exchange factor which binds to and activates alpha subunits of guanine nucleotide-binding proteins (G proteins). This chain is Nucleobindin-1 (NUCB1), found in Bos taurus (Bovine).